Consider the following 89-residue polypeptide: Small ribosomal subunit protein uS14 (89 aa).

Belongs to the universal ribosomal protein uS14 family. As to quaternary structure, part of the 30S ribosomal subunit. Contacts proteins S3 and S10.

In terms of biological role, binds 16S rRNA, required for the assembly of 30S particles and may also be responsible for determining the conformation of the 16S rRNA at the A site. In Akkermansia muciniphila (strain ATCC BAA-835 / DSM 22959 / JCM 33894 / BCRC 81048 / CCUG 64013 / CIP 107961 / Muc), this protein is Small ribosomal subunit protein uS14.